The primary structure comprises 212 residues: Uracil phosphoribosyltransferase (212 aa).

5-phospho-alpha-D-ribose 1-diphosphate-binding positions include Arg-78, Arg-103, and 130–138 (DPMLATGGS). Uracil is bound by residues Ile-193 and 198 to 200 (GDA). Asp-199 contributes to the 5-phospho-alpha-D-ribose 1-diphosphate binding site.

This sequence belongs to the UPRTase family. Requires Mg(2+) as cofactor.

It carries out the reaction UMP + diphosphate = 5-phospho-alpha-D-ribose 1-diphosphate + uracil. Its pathway is pyrimidine metabolism; UMP biosynthesis via salvage pathway; UMP from uracil: step 1/1. Allosterically activated by GTP. Catalyzes the conversion of uracil and 5-phospho-alpha-D-ribose 1-diphosphate (PRPP) to UMP and diphosphate. In Bordetella petrii (strain ATCC BAA-461 / DSM 12804 / CCUG 43448), this protein is Uracil phosphoribosyltransferase.